Here is a 773-residue protein sequence, read N- to C-terminus: ATP-dependent permease MDL2, mitochondrial (773 aa).

A mitochondrion-targeting transit peptide spans 1–90 (MLNGRLPLLR…SPISKGSARS (90 aa)). The span at 73–84 (PETSLPSASPIS) shows a compositional bias: polar residues. The interval 73–95 (PETSLPSASPISKGSARSAHAKE) is disordered. An ABC transmembrane type-1 domain is found at 119–413 (LLTAILLLTI…LSTFYSEIMQ (295 aa)). The next 3 helical transmembrane spans lie at 123 to 143 (ILLL…IGIV), 170 to 192 (FLSF…FILL), and 257 to 277 (VVGV…LLFF). 481–488 (GPSGRGKS) is an ATP binding site. One can recognise an ABC transporter domain in the interval 493-733 (LLLRYYNPTT…DDNDNNHDND (241 aa)). Basic and acidic residues-rich tracts occupy residues 706–733 (KEDL…HDND) and 740–762 (ETKD…DAAK). Residues 706-773 (KEDLNESKEH…ANPIKITPQP (68 aa)) are disordered.

This sequence belongs to the ABC transporter superfamily. ABCB family. Mitochondrial peptide exporter (TC 3.A.1.212) subfamily.

It localises to the mitochondrion inner membrane. This Saccharomyces cerevisiae (strain ATCC 204508 / S288c) (Baker's yeast) protein is ATP-dependent permease MDL2, mitochondrial (MDL2).